A 282-amino-acid chain; its full sequence is ATP synthase gamma chain (282 aa).

Belongs to the ATPase gamma chain family. In terms of assembly, F-type ATPases have 2 components, CF(1) - the catalytic core - and CF(0) - the membrane proton channel. CF(1) has five subunits: alpha(3), beta(3), gamma(1), delta(1), epsilon(1). CF(0) has three main subunits: a, b and c.

The protein resides in the cell membrane. Produces ATP from ADP in the presence of a proton gradient across the membrane. The gamma chain is believed to be important in regulating ATPase activity and the flow of protons through the CF(0) complex. This chain is ATP synthase gamma chain, found in Clostridium botulinum (strain Loch Maree / Type A3).